The chain runs to 791 residues: MEKMNWLSRLASRVPGHRVPQGASLQTPVMADPETCLMVFKNHWSQVVRILERQGSRAAAGGADDLSAVRNHTYQMLTLLAEDRAVPSAPSGPGPLLEFALREDLLSRVLTWQLQWDEFGDGVEERRAEQLKLFEMLVSEARQPLLRHGPVREALLALLDACGRPVPSSPALDEGLVLLLSQLCVCVAREPSLLEFFLQPPPEPGAAPRLLLFSRLVPFVHREGTLGQQARDALLLLMALSDGSPTVGRYIADHSYFCPVLATGLSALYSSLPRKIEVPGDDWHCLRREDWIGVPALALFMSSLEFCNAVIQVAHPLVQKQLVDYIHNGFLVPVMGPALHKTSVEEMIASTAYLELFLRSISEPALLRTFLRFLLLHRHDTHTILDTLVARIGSNSRLCMVSLSLFRTLLNLSCEDVLLQLVLRYLVPCNHVMLSQKPAVRDVDLYGRAADKFLSLIPRCCRHHAPSPPRPEHASWARGGPSREPGRREDITGPGSPSVDSSSVVTVPRPSTPSRLALFLRQQSLGGSESPGPAPRSPGLTASPTSSPGRRPSPAEEPGPFMAVLFAKLENMLQNSVYVNFLLTGLVAQLACHPQPLLRSFLLNTNMVFQPSVKSLLQVLGSVKNKIESFAASQEDFPALLSKAKKYLIARGKLDWAEGPTAGPTPRRSDSLVRSRRPSLGELLLRHAHSPTRARQAVQVLQPGRDGTGLGLGGGSPGASTPVLLPRGGASERQGEALRVKNAVYCAVIFPEFLKELAAISQAHAVTSPFLLDTSEEVSVPPISGFGPLNP.

Disordered stretches follow at residues 465-510 (APSP…VPRP) and 524-556 (SLGG…SPAE). Residue Ser467 is modified to Phosphoserine. Positions 496–510 (SPSVDSSSVVTVPRP) are enriched in low complexity. 5 positions are modified to phosphoserine: Ser524, Ser537, Ser543, Ser547, and Ser679. The segment covering 541 to 552 (TASPTSSPGRRP) has biased composition (low complexity). Phosphothreonine is present on Thr708. A Phosphoserine modification is found at Ser716.

Belongs to the FHIP family. Component of the FTS/Hook/FHIP complex (FHF complex), composed of AKTIP/FTS, FHIP1B, and one or more members of the Hook family of proteins HOOK1, HOOK2, and HOOK3. The FHF complex associates with the homotypic vesicular sorting complex (the HOPS complex).

In terms of biological role, component of the FTS/Hook/FHIP complex (FHF complex). The FHF complex may function to promote vesicle trafficking and/or fusion via the homotypic vesicular protein sorting complex (the HOPS complex). FHF complex promotes the distribution of AP-4 complex to the perinuclear area of the cell. This Rattus norvegicus (Rat) protein is FHF complex subunit HOOK-interacting protein 1B (Fhip1b).